The primary structure comprises 156 residues: MAVKIKLTRLGKIRNPQYRIIVADARTRRDGRAIEVIGRYHPKEEPSLIQIDSERAQYWLGVGAQPTEPVLALLKITGDWQKFKGLPGAEGTLKVKEPKPSKLDLFNAALAEAESGTTAAATTPKKKKAPKKDEAAEAPAEAAEAPAEAADAASES.

Low complexity-rich tracts occupy residues 113–123 (AESGTTAAATT) and 137–156 (EAPA…ASES). Residues 113–156 (AESGTTAAATTPKKKKAPKKDEAAEAPAEAAEAPAEAADAASES) form a disordered region.

Belongs to the bacterial ribosomal protein bS16 family.

The protein is Small ribosomal subunit protein bS16 of Mycolicibacterium smegmatis (strain ATCC 700084 / mc(2)155) (Mycobacterium smegmatis).